Here is a 259-residue protein sequence, read N- to C-terminus: Snake venom serine proteinase 2 (259 aa).

A signal peptide spans 1–18; sequence MVLIRVLANLLILQLSYA. Positions 19 to 24 are excised as a propeptide; the sequence is QKSSEL. Residues 25-250 form the Peptidase S1 domain; sequence IFGGRPCNRN…HLDWIQSIIA (226 aa). Cystine bridges form between cysteine 31-cysteine 162, cysteine 49-cysteine 65, cysteine 97-cysteine 257, cysteine 141-cysteine 211, cysteine 173-cysteine 190, and cysteine 201-cysteine 226. Catalysis depends on charge relay system residues histidine 64 and aspartate 109. Catalysis depends on serine 205, which acts as the Charge relay system.

The protein belongs to the peptidase S1 family. Snake venom subfamily. As to quaternary structure, monomer. In terms of tissue distribution, expressed by the venom gland.

It is found in the secreted. Functionally, snake venom serine protease that may act in the hemostasis system of the prey. The sequence is that of Snake venom serine proteinase 2 from Crotalus adamanteus (Eastern diamondback rattlesnake).